The primary structure comprises 285 residues: Bifunctional protein FolD (285 aa).

NADP(+)-binding positions include 165–167 (GRS) and Ser190.

Belongs to the tetrahydrofolate dehydrogenase/cyclohydrolase family. Homodimer.

It catalyses the reaction (6R)-5,10-methylene-5,6,7,8-tetrahydrofolate + NADP(+) = (6R)-5,10-methenyltetrahydrofolate + NADPH. It carries out the reaction (6R)-5,10-methenyltetrahydrofolate + H2O = (6R)-10-formyltetrahydrofolate + H(+). The protein operates within one-carbon metabolism; tetrahydrofolate interconversion. In terms of biological role, catalyzes the oxidation of 5,10-methylenetetrahydrofolate to 5,10-methenyltetrahydrofolate and then the hydrolysis of 5,10-methenyltetrahydrofolate to 10-formyltetrahydrofolate. The protein is Bifunctional protein FolD of Burkholderia thailandensis (strain ATCC 700388 / DSM 13276 / CCUG 48851 / CIP 106301 / E264).